A 565-amino-acid chain; its full sequence is Mediator of RNA polymerase II transcription subunit 17 (565 aa).

A compositionally biased stretch (polar residues) spans 138 to 152; the sequence is TSLNSDRLGQDSNDN. Positions 138–160 are disordered; the sequence is TSLNSDRLGQDSNDNQESKATDS.

Belongs to the Mediator complex subunit 17 family. In terms of assembly, component of the Mediator complex.

Its subcellular location is the nucleus. Functionally, component of the Mediator complex, a coactivator involved in the regulated transcription of nearly all RNA polymerase II-dependent genes. Mediator functions as a bridge to convey information from gene-specific regulatory proteins to the basal RNA polymerase II transcription machinery. Mediator is recruited to promoters by direct interactions with regulatory proteins and serves as a scaffold for the assembly of a functional preinitiation complex with RNA polymerase II and the general transcription factors. The sequence is that of Mediator of RNA polymerase II transcription subunit 17 (SRB4) from Candida albicans (strain SC5314 / ATCC MYA-2876) (Yeast).